We begin with the raw amino-acid sequence, 1390 residues long: DNA-directed RNA polymerase subunit beta' (1390 aa).

Positions 70, 72, 85, and 88 each coordinate Zn(2+). Residues aspartate 460, aspartate 462, and aspartate 464 each contribute to the Mg(2+) site. Zn(2+) contacts are provided by cysteine 814, cysteine 888, cysteine 895, and cysteine 898.

Belongs to the RNA polymerase beta' chain family. As to quaternary structure, the RNAP catalytic core consists of 2 alpha, 1 beta, 1 beta' and 1 omega subunit. When a sigma factor is associated with the core the holoenzyme is formed, which can initiate transcription. It depends on Mg(2+) as a cofactor. Requires Zn(2+) as cofactor.

The catalysed reaction is RNA(n) + a ribonucleoside 5'-triphosphate = RNA(n+1) + diphosphate. Functionally, DNA-dependent RNA polymerase catalyzes the transcription of DNA into RNA using the four ribonucleoside triphosphates as substrates. The polypeptide is DNA-directed RNA polymerase subunit beta' (Pseudoalteromonas translucida (strain TAC 125)).